The sequence spans 101 residues: Small ribosomal subunit protein uS14 (101 aa).

Residues 36–72 (GTDESREAARAGIQRLPRDASPIRVRNRDGIDGRPRG) form a disordered region. A compositionally biased stretch (basic and acidic residues) spans 61–70 (RNRDGIDGRP).

The protein belongs to the universal ribosomal protein uS14 family. In terms of assembly, part of the 30S ribosomal subunit. Contacts proteins S3 and S10.

Binds 16S rRNA, required for the assembly of 30S particles and may also be responsible for determining the conformation of the 16S rRNA at the A site. The chain is Small ribosomal subunit protein uS14 from Clavibacter michiganensis subsp. michiganensis (strain NCPPB 382).